Here is a 634-residue protein sequence, read N- to C-terminus: Threonine--tRNA ligase (634 aa).

In terms of domain architecture, TGS spans 1-61; that stretch reads MINIRFPDGS…NSNCELRLIT (61 aa). The catalytic stretch occupies residues 241-532; it reads DHRKIGKVLD…LIEHYAGNLP (292 aa). Zn(2+)-binding residues include cysteine 332, histidine 383, and histidine 509.

The protein belongs to the class-II aminoacyl-tRNA synthetase family. In terms of assembly, homodimer. Requires Zn(2+) as cofactor.

The protein resides in the cytoplasm. It catalyses the reaction tRNA(Thr) + L-threonine + ATP = L-threonyl-tRNA(Thr) + AMP + diphosphate + H(+). Catalyzes the attachment of threonine to tRNA(Thr) in a two-step reaction: L-threonine is first activated by ATP to form Thr-AMP and then transferred to the acceptor end of tRNA(Thr). Also edits incorrectly charged L-seryl-tRNA(Thr). The polypeptide is Threonine--tRNA ligase (Francisella tularensis subsp. holarctica (strain OSU18)).